The sequence spans 375 residues: Erythronate-4-phosphate dehydrogenase (375 aa).

Ser-49 lines the substrate pocket. Asp-150 and Thr-178 together coordinate NAD(+). Arg-211 is an active-site residue. Position 231 (Asp-231) interacts with NAD(+). Glu-236 is a catalytic residue. The active-site Proton donor is His-253. An NAD(+)-binding site is contributed by Gly-256.

Belongs to the D-isomer specific 2-hydroxyacid dehydrogenase family. PdxB subfamily. As to quaternary structure, homodimer.

It is found in the cytoplasm. It carries out the reaction 4-phospho-D-erythronate + NAD(+) = (R)-3-hydroxy-2-oxo-4-phosphooxybutanoate + NADH + H(+). The protein operates within cofactor biosynthesis; pyridoxine 5'-phosphate biosynthesis; pyridoxine 5'-phosphate from D-erythrose 4-phosphate: step 2/5. Its function is as follows. Catalyzes the oxidation of erythronate-4-phosphate to 3-hydroxy-2-oxo-4-phosphonooxybutanoate. The polypeptide is Erythronate-4-phosphate dehydrogenase (Hydrogenovibrio crunogenus (strain DSM 25203 / XCL-2) (Thiomicrospira crunogena)).